Here is a 188-residue protein sequence, read N- to C-terminus: Large ribosomal subunit protein eL18 (188 aa).

The tract at residues 151 to 188 (HFGPAPGVPHSHTKPLVRSKGRKFERARGRRKSCGYKK) is disordered. Composition is skewed to basic residues over residues 161 to 171 (SHTKPLVRSKG) and 178 to 188 (RGRRKSCGYKK).

Belongs to the eukaryotic ribosomal protein eL18 family.

Its subcellular location is the cytoplasm. The polypeptide is Large ribosomal subunit protein eL18 (RpL18) (Lysiphlebus testaceipes (Greenbugs aphid parastoid)).